Reading from the N-terminus, the 193-residue chain is Xanthine phosphoribosyltransferase (193 aa).

Positions 20 and 27 each coordinate xanthine. 128–132 (ANGQA) contacts 5-phospho-alpha-D-ribose 1-diphosphate. Xanthine is bound at residue Lys156.

This sequence belongs to the purine/pyrimidine phosphoribosyltransferase family. Xpt subfamily. Homodimer.

Its subcellular location is the cytoplasm. It carries out the reaction XMP + diphosphate = xanthine + 5-phospho-alpha-D-ribose 1-diphosphate. It functions in the pathway purine metabolism; XMP biosynthesis via salvage pathway; XMP from xanthine: step 1/1. Converts the preformed base xanthine, a product of nucleic acid breakdown, to xanthosine 5'-monophosphate (XMP), so it can be reused for RNA or DNA synthesis. The chain is Xanthine phosphoribosyltransferase from Streptococcus equi subsp. equi (strain 4047).